The following is an 837-amino-acid chain: Protein translocase subunit SecA 1 (837 aa).

Residues glutamine 85, 103–107 (GEGKT), and aspartate 493 each bind ATP. The Zn(2+) site is built by cysteine 821, cysteine 823, cysteine 832, and histidine 833.

The protein belongs to the SecA family. As to quaternary structure, monomer and homodimer. Part of the essential Sec protein translocation apparatus which comprises SecA, SecYEG and auxiliary proteins SecDF. Other proteins may also be involved. Zn(2+) serves as cofactor.

It is found in the cell membrane. The protein resides in the cytoplasm. The enzyme catalyses ATP + H2O + cellular proteinSide 1 = ADP + phosphate + cellular proteinSide 2.. Its function is as follows. Part of the Sec protein translocase complex. Interacts with the SecYEG preprotein conducting channel. Has a central role in coupling the hydrolysis of ATP to the transfer of proteins into and across the cell membrane, serving as an ATP-driven molecular motor driving the stepwise translocation of polypeptide chains across the membrane. This chain is Protein translocase subunit SecA 1, found in Streptococcus pneumoniae serotype 4 (strain ATCC BAA-334 / TIGR4).